The primary structure comprises 169 residues: MSATLQPYLEAVRHTLQAALCLEQFSSQVVERHNKPEVEVQTSKELLMTPVVVARNKQERVLIEPSVNSVRISIAIKQSDEIEKILCHKFTRFMCQRADNFFVLRRKPLPGYDISFLITASHTEAMFKHKLVDFLLHFMQEIDKEISEMKLSLNARARVSAEEFLKRFN.

It belongs to the ARPC4 family. As to quaternary structure, component of the Arp2/3 complex, at least composed of arx-1, arx-2, arx-4 and arx-6.

It localises to the cytoplasm. The protein localises to the cytoskeleton. Functionally, functions as actin-binding component of the Arp2/3 complex which is involved in regulation of actin polymerization and together with an activating nucleation-promoting factor (NPF) mediates the formation of branched actin networks. Seems to contact the mother actin filament. Plays a role in time-dependent memory loss and the retention of conditioned behavior over time. This chain is Probable actin-related protein 2/3 complex subunit 4, found in Caenorhabditis elegans.